The sequence spans 336 residues: Inositol 2-dehydrogenase (336 aa).

It belongs to the Gfo/Idh/MocA family. Homotetramer.

It catalyses the reaction myo-inositol + NAD(+) = scyllo-inosose + NADH + H(+). Functionally, involved in the oxidation of myo-inositol (MI) to 2-keto-myo-inositol (2KMI or 2-inosose). This chain is Inositol 2-dehydrogenase, found in Pseudomonas syringae pv. syringae (strain B728a).